The chain runs to 410 residues: Cytohesin-2 (410 aa).

The stretch at 13–56 forms a coiled coil; it reads PEERMELENIRRRKQELLVEIQRLREELSEAMSEVEGLEANEGS. The region spanning 54–241 is the SEC7 domain; it reads EGSKTLQRNR…RNLYDSIRNE (188 aa). Residues 259 to 386 form the PH domain; it reads NPDREGWLLK…WIKSIQAAVS (128 aa). Residues 268-271, Arg-290, Tyr-301, Arg-311, Lys-349, Asn-360, and His-361 contribute to the a 1,2-diacyl-sn-glycero-3-phospho-(1D-myo-inositol-3,4,5-trisphosphate) site; that span reads KLGA. The interval 397-405 is C-terminal autoinhibitory region; the sequence is RKKRISVKK.

In terms of assembly, heteromer. Composed of TAMALIN, CYTH2 and at least one GRM1. Interacts with ARRB1. Interacts with ARL4D; the interaction is direct. Directly interacts with CCDC120 through the coiled coil domain; this interaction stabilizes CCDC120, possibly by preventing its ubiquitination, and is required for neurite growth in neuroblastoma cells. Interacts (via N-terminal domain) with INAVA (via N-terminal domain).

Its subcellular location is the cell membrane. It localises to the cytoplasm. The protein resides in the cell projection. The protein localises to the growth cone. Functionally, acts as a guanine-nucleotide exchange factor (GEF). Promotes guanine-nucleotide exchange on ARF1, ARF3 and ARF6. Promotes the activation of ARF factors through replacement of GDP with GTP. The cell membrane form, in association with ARL4 proteins, recruits ARF6 to the plasma membrane. Involved in neurite growth. This is Cytohesin-2 (CYTH2) from Bos taurus (Bovine).